We begin with the raw amino-acid sequence, 292 residues long: Probable ABC transporter permease protein YurN (292 aa).

The next 6 membrane-spanning stretches (helical) occupy residues 7–27, 70–90, 106–126, 160–180, 215–235, and 260–280; these read IIPY…YIPI, VLYA…LAAV, VFFL…DFIY, VIFV…IVSI, FVAV…PYIL, and MMGY…ALSL. The ABC transmembrane type-1 domain occupies 66-282; that stretch reads LTNNVLYAVI…IITLALSLMQ (217 aa).

This sequence belongs to the binding-protein-dependent transport system permease family. MalFG subfamily.

The protein localises to the cell membrane. Probably part of the binding-protein-dependent transport system YurMNO. Probably responsible for the translocation of the substrate across the membrane. This Bacillus subtilis (strain 168) protein is Probable ABC transporter permease protein YurN (yurN).